The sequence spans 548 residues: Tylosin resistance ATP-binding protein TlrC (548 aa).

ABC transporter domains are found at residues 9-265 and 347-547; these read LSLH…RRRQ and IATA…VSGA. ATP is bound by residues 41–48 and 387–394; these read GDNGAGKS and GPNGAGKS.

It belongs to the ABC transporter superfamily.

It localises to the cell membrane. Functionally, responsible for tylosin resistance, and is proposed to be a subunit of a multicomponent export system for the energy-dependent efflux of tylosin. The sequence is that of Tylosin resistance ATP-binding protein TlrC (tlrC) from Streptomyces fradiae (Streptomyces roseoflavus).